The primary structure comprises 375 residues: Phosphoglucan phosphatase DSP4, amyloplastic (375 aa).

The N-terminal 42 residues, 1–42, are a transit peptide targeting the amyloplast; the sequence is MFCVQNLPRSSALPLQSFKSHQRRPPCSVNTLGVMSNVNLHR. Residues 49–71 form a disordered region; sequence ISGPTSSAETSDANVEEEKSETY. Positions 51–61 are enriched in polar residues; the sequence is GPTSSAETSDA. The Tyrosine-protein phosphatase domain maps to 92-249; it reads NYNFIRPDLI…AADILTGLRK (158 aa). Cys193 serves as the catalytic Phosphocysteine intermediate. 194–199 provides a ligand contact to substrate; sequence TAGLGR. Residues 254–330 are polysaccharide binding; that stretch reads LTWKNPDCTT…NKDGHVNNFV (77 aa).

As to expression, expressed in phloem parenchyma of 16-24 week old seedlings and 2 year old trees (at protein level). Expressed in leaves of 16-24 week old seedlings and 2 year old trees.

It localises to the plastid. The protein localises to the amyloplast. It is found in the nucleus. Its function is as follows. Starch granule-associated phosphoglucan phosphatase involved in the control of starch accumulation. Acts as a major regulator of the initial steps of starch degradation at the granule surface. Functions during the day by dephosphorylating the night-accumulated phospho-oligosaccharides. Can release phosphate from both the C6 and the C3 positions. The protein is Phosphoglucan phosphatase DSP4, amyloplastic of Castanea sativa (Sweet chestnut).